Consider the following 69-residue polypeptide: uncharacterized protein (69 aa).

In terms of domain architecture, HTH cro/C1-type spans 5-60 (IREHRKELGLTQEELAERVGVTRQTIIALEKGRYSPSLILAHRIARALGREHIEDI). Positions 16-35 (QEELAERVGVTRQTIIALEK) form a DNA-binding region, H-T-H motif.

This is an uncharacterized protein from Methanothermobacter thermautotrophicus (strain ATCC 29096 / DSM 1053 / JCM 10044 / NBRC 100330 / Delta H) (Methanobacterium thermoautotrophicum).